The following is a 237-amino-acid chain: Purine nucleoside phosphorylase DeoD-type (237 aa).

A purine D-ribonucleoside is bound at residue His4. Phosphate-binding positions include Gly20, Arg24, Arg43, and 87–90 (RVGT). A purine D-ribonucleoside contacts are provided by residues 179-181 (EME) and 203-204 (SD). The active-site Proton donor is the Asp204.

This sequence belongs to the PNP/UDP phosphorylase family. As to quaternary structure, homohexamer; trimer of homodimers.

It carries out the reaction a purine D-ribonucleoside + phosphate = a purine nucleobase + alpha-D-ribose 1-phosphate. The catalysed reaction is a purine 2'-deoxy-D-ribonucleoside + phosphate = a purine nucleobase + 2-deoxy-alpha-D-ribose 1-phosphate. Functionally, catalyzes the reversible phosphorolytic breakdown of the N-glycosidic bond in the beta-(deoxy)ribonucleoside molecules, with the formation of the corresponding free purine bases and pentose-1-phosphate. This chain is Purine nucleoside phosphorylase DeoD-type, found in Exiguobacterium sp. (strain ATCC BAA-1283 / AT1b).